The following is an 84-amino-acid chain: Fulditoxin (84 aa).

The first 21 residues, 1–21, serve as a signal peptide directing secretion; that stretch reads MKTLLLTLVVVTIVCLDLGNS. Disulfide bonds link C24-C41, C34-C59, C63-C71, and C72-C77. H50 is a binding site for Zn(2+).

Belongs to the three-finger toxin family. Short-chain subfamily. In terms of assembly, homodimer; non-covalently linked. Is able to form a tetramer of dimers in the presence of 2 zinc ions. In terms of tissue distribution, expressed by the venom gland.

The protein resides in the secreted. Its function is as follows. Postsynaptic neurotoxin that produces potent, and completely reversible, postsynaptic neuromuscular blockade, as well as broad spectrum inhibition of human muscle and neuronal nicotinic acetylcholine receptors (nAChRs). Inhibition is potent or moderate, depending on the receptor (alpha-1-beta-1-delta-epsilon/CHRNA1-CHRNB1-CHRND-CHRNE (IC(50)=2.56 uM), alpha-4-beta-2/CHRNA4-CHRNB2 (IC(50)=1.8 uM), alpha-7/CHRNA7 (IC(50)=7 uM), and alpha-3-beta-2/CHRNA3-CHRNB2 (IC(50)=12.6 uM)). Acts as a competitive antagonist of ACh. Binds to chicken muscle-type nicotinic acetylcholine receptor (AChR) with high potency compared with the cloned human receptor. Unlike short-chain alpha-3FTxs that only bind to muscle nAChRs, this toxin utilizes dimerization to expand its pharmacological targets to block neuronal nAChRs. The chain is Fulditoxin from Micrurus fulvius (Eastern coral snake).